A 203-amino-acid polypeptide reads, in one-letter code: LexA repressor (203 aa).

The H-T-H motif DNA-binding region spans 28–47 (IREIGDEFGITAKGAYDHLK). Catalysis depends on for autocatalytic cleavage activity residues S127 and K164.

The protein belongs to the peptidase S24 family. Homodimer.

It carries out the reaction Hydrolysis of Ala-|-Gly bond in repressor LexA.. Represses a number of genes involved in the response to DNA damage (SOS response), including recA and lexA. In the presence of single-stranded DNA, RecA interacts with LexA causing an autocatalytic cleavage which disrupts the DNA-binding part of LexA, leading to derepression of the SOS regulon and eventually DNA repair. This Leptospira interrogans serogroup Icterohaemorrhagiae serovar copenhageni (strain Fiocruz L1-130) protein is LexA repressor.